The chain runs to 112 residues: Large ribosomal subunit protein uL24 (112 aa).

This sequence belongs to the universal ribosomal protein uL24 family. As to quaternary structure, part of the 50S ribosomal subunit.

Its function is as follows. One of two assembly initiator proteins, it binds directly to the 5'-end of the 23S rRNA, where it nucleates assembly of the 50S subunit. Functionally, one of the proteins that surrounds the polypeptide exit tunnel on the outside of the subunit. The sequence is that of Large ribosomal subunit protein uL24 from Desulfitobacterium hafniense (strain Y51).